The primary structure comprises 197 residues: MATSPKINRREHILQCLAQMLETSPGQRITTAKLAAEVGVSEAALYRHFPSKARMFEGLIEFIEDAILSRLNLIMDEEKDTMMRCQLVLQLLLVFSERNPGISRVLNGDALLGENERLRSRISVLFAKIETQLKQILREKTLREGQGFNLDEAILANLLLAVAEGRIAQFVRSEFKQKPTLHFDEQWTFIQQQLLRS.

The HTH tetR-type domain maps to 7–67 (INRREHILQC…GLIEFIEDAI (61 aa)). Positions 30–49 (TTAKLAAEVGVSEAALYRHF) form a DNA-binding region, H-T-H motif.

This sequence belongs to the nucleoid occlusion factor SlmA family. As to quaternary structure, homodimer. Interacts with FtsZ.

The protein localises to the cytoplasm. Its subcellular location is the nucleoid. Functionally, required for nucleoid occlusion (NO) phenomenon, which prevents Z-ring formation and cell division over the nucleoid. Acts as a DNA-associated cell division inhibitor that binds simultaneously chromosomal DNA and FtsZ, and disrupts the assembly of FtsZ polymers. SlmA-DNA-binding sequences (SBS) are dispersed on non-Ter regions of the chromosome, preventing FtsZ polymerization at these regions. This chain is Nucleoid occlusion factor SlmA, found in Shewanella denitrificans (strain OS217 / ATCC BAA-1090 / DSM 15013).